The sequence spans 57 residues: uncharacterized protein (57 aa).

A disordered region spans residues 1 to 57 (MPHYVVVKSPMRRRRSPRRRSPRVCYSPRRVACSPRRRSPRRRSPRRRSPRRSIVVY). Residues 10–22 (PMRRRRSPRRRSP) are compositionally biased toward basic residues. Residues 23 to 34 (RVCYSPRRVACS) show a composition bias toward low complexity. Residues 35–51 (PRRRSPRRRSPRRRSPR) are compositionally biased toward basic residues.

This is an uncharacterized protein from Acheta domesticus (House cricket).